A 716-amino-acid polypeptide reads, in one-letter code: DNA ligase (716 aa).

NAD(+)-binding positions include 50–54 (DAEYD), 99–100 (SL), and Glu132. Lys134 (N6-AMP-lysine intermediate) is an active-site residue. NAD(+) is bound by residues Arg155, Glu192, Lys308, and Lys332. 4 residues coordinate Zn(2+): Cys437, Cys439, Cys461, and Cys467. The region spanning 638–716 (KSNSAVAGKT…EDEWLKLIGE (79 aa)) is the BRCT domain.

It belongs to the NAD-dependent DNA ligase family. LigA subfamily. Requires Mg(2+) as cofactor. It depends on Mn(2+) as a cofactor.

The enzyme catalyses NAD(+) + (deoxyribonucleotide)n-3'-hydroxyl + 5'-phospho-(deoxyribonucleotide)m = (deoxyribonucleotide)n+m + AMP + beta-nicotinamide D-nucleotide.. Its function is as follows. DNA ligase that catalyzes the formation of phosphodiester linkages between 5'-phosphoryl and 3'-hydroxyl groups in double-stranded DNA using NAD as a coenzyme and as the energy source for the reaction. It is essential for DNA replication and repair of damaged DNA. This chain is DNA ligase, found in Bradyrhizobium diazoefficiens (strain JCM 10833 / BCRC 13528 / IAM 13628 / NBRC 14792 / USDA 110).